We begin with the raw amino-acid sequence, 299 residues long: Probable endonuclease 4 (299 aa).

Histidine 69, histidine 110, glutamate 145, aspartate 179, histidine 182, histidine 214, aspartate 227, histidine 229, and glutamate 259 together coordinate Zn(2+).

The protein belongs to the AP endonuclease 2 family. The cofactor is Zn(2+).

The catalysed reaction is Endonucleolytic cleavage to 5'-phosphooligonucleotide end-products.. In terms of biological role, endonuclease IV plays a role in DNA repair. It cleaves phosphodiester bonds at apurinic or apyrimidinic (AP) sites, generating a 3'-hydroxyl group and a 5'-terminal sugar phosphate. In Geobacillus kaustophilus (strain HTA426), this protein is Probable endonuclease 4.